A 417-amino-acid chain; its full sequence is Serine hydroxymethyltransferase (417 aa).

(6S)-5,6,7,8-tetrahydrofolate contacts are provided by residues Leu-121 and 125 to 127 (GHL). The residue at position 229 (Lys-229) is an N6-(pyridoxal phosphate)lysine. Position 355 to 357 (355 to 357 (SPF)) interacts with (6S)-5,6,7,8-tetrahydrofolate.

This sequence belongs to the SHMT family. In terms of assembly, homodimer. Requires pyridoxal 5'-phosphate as cofactor.

It is found in the cytoplasm. It catalyses the reaction (6R)-5,10-methylene-5,6,7,8-tetrahydrofolate + glycine + H2O = (6S)-5,6,7,8-tetrahydrofolate + L-serine. It participates in one-carbon metabolism; tetrahydrofolate interconversion. Its pathway is amino-acid biosynthesis; glycine biosynthesis; glycine from L-serine: step 1/1. Functionally, catalyzes the reversible interconversion of serine and glycine with tetrahydrofolate (THF) serving as the one-carbon carrier. This reaction serves as the major source of one-carbon groups required for the biosynthesis of purines, thymidylate, methionine, and other important biomolecules. Also exhibits THF-independent aldolase activity toward beta-hydroxyamino acids, producing glycine and aldehydes, via a retro-aldol mechanism. The chain is Serine hydroxymethyltransferase from Xylella fastidiosa (strain 9a5c).